Consider the following 350-residue polypeptide: Probable dual-specificity RNA methyltransferase RlmN (350 aa).

The active-site Proton acceptor is E98. The Radical SAM core domain occupies 104 to 334; the sequence is HTYGNSVCVS…VTVRRELGGD (231 aa). A disulfide bridge connects residues C111 and C339. 3 residues coordinate [4Fe-4S] cluster: C118, C122, and C125. S-adenosyl-L-methionine-binding positions include 165 to 166, S197, 220 to 222, and N296; these read GE and SLH. C339 serves as the catalytic S-methylcysteine intermediate.

This sequence belongs to the radical SAM superfamily. RlmN family. [4Fe-4S] cluster is required as a cofactor.

It is found in the cytoplasm. The enzyme catalyses adenosine(2503) in 23S rRNA + 2 reduced [2Fe-2S]-[ferredoxin] + 2 S-adenosyl-L-methionine = 2-methyladenosine(2503) in 23S rRNA + 5'-deoxyadenosine + L-methionine + 2 oxidized [2Fe-2S]-[ferredoxin] + S-adenosyl-L-homocysteine. It carries out the reaction adenosine(37) in tRNA + 2 reduced [2Fe-2S]-[ferredoxin] + 2 S-adenosyl-L-methionine = 2-methyladenosine(37) in tRNA + 5'-deoxyadenosine + L-methionine + 2 oxidized [2Fe-2S]-[ferredoxin] + S-adenosyl-L-homocysteine. Its function is as follows. Specifically methylates position 2 of adenine 2503 in 23S rRNA and position 2 of adenine 37 in tRNAs. This chain is Probable dual-specificity RNA methyltransferase RlmN, found in Desulforamulus reducens (strain ATCC BAA-1160 / DSM 100696 / MI-1) (Desulfotomaculum reducens).